A 386-amino-acid polypeptide reads, in one-letter code: 8-amino-7-oxononanoate synthase (386 aa).

Position 20 (Arg-20) interacts with substrate. Position 107–108 (107–108 (GY)) interacts with pyridoxal 5'-phosphate. Position 132 (His-132) interacts with substrate. Positions 178, 206, and 234 each coordinate pyridoxal 5'-phosphate. Position 237 is an N6-(pyridoxal phosphate)lysine (Lys-237). Thr-351 is a binding site for substrate.

This sequence belongs to the class-II pyridoxal-phosphate-dependent aminotransferase family. BioF subfamily. Homodimer. It depends on pyridoxal 5'-phosphate as a cofactor.

The catalysed reaction is 6-carboxyhexanoyl-[ACP] + L-alanine + H(+) = (8S)-8-amino-7-oxononanoate + holo-[ACP] + CO2. The protein operates within cofactor biosynthesis; biotin biosynthesis. In terms of biological role, catalyzes the decarboxylative condensation of pimeloyl-[acyl-carrier protein] and L-alanine to produce 8-amino-7-oxononanoate (AON), [acyl-carrier protein], and carbon dioxide. In Aromatoleum aromaticum (strain DSM 19018 / LMG 30748 / EbN1) (Azoarcus sp. (strain EbN1)), this protein is 8-amino-7-oxononanoate synthase.